Here is a 487-residue protein sequence, read N- to C-terminus: Complement C1r subcomponent-like protein (487 aa).

The first 35 residues, 1–35 (MPGPRVWGKYLWRSPHSKGCPGAMWWLLLWGVLQA), serve as a signal peptide directing secretion. The CUB domain occupies 39 to 163 (RGSVLLAQEL…KGFLALYQTV (125 aa)). The cysteines at positions 94 and 112 are disulfide-linked. 2 N-linked (GlcNAc...) asparagine glycosylation sites follow: asparagine 147 and asparagine 166. The Sushi domain maps to 165 to 230 (VNYSQPISEA…DGEEVLQCMP (66 aa)). An intrachain disulfide couples cysteine 195 to cysteine 228. An N-linked (GlcNAc...) (complex) asparagine glycan is attached at asparagine 242. The 240-residue stretch at 245–484 (TLGSSRAKLG…YVDWIKGVMN (240 aa)) folds into the Peptidase S1 domain. The Charge relay system role is filled by histidine 283. N-linked (GlcNAc...) asparagine glycosylation is present at asparagine 296. Aspartate 339 serves as the catalytic Charge relay system. Residue asparagine 363 is glycosylated (N-linked (GlcNAc...) asparagine). 2 cysteine pairs are disulfide-bonded: cysteine 402-cysteine 421 and cysteine 432-cysteine 462. The active-site Charge relay system is serine 436.

The protein belongs to the peptidase S1 family. As to expression, highly expressed in placenta, liver, kidney, pancreas, moderately in lung, spleen, prostate, ovary, colon, and PBL, and weakly in heart, skeletal muscle, thymus, testis, and small intestine. Expressed in PC-3 (prostate adenocarcinoma) and SK-OV-3 (ovary adenocarcinoma) cells, but not in LoVo and HT-29 (colon adenocarcinoma), SMMC7721 (hepatocellular carcinoma), CaoV-3 (ovary adenocarcinoma), HeLa (cervix epithelioid carcinoma), MCF-7 (breast adenocarcinoma), U-251MG (glioma) or A-549 (lung carcinoma) cells. Widely expressed in myeloid leukemia cell lines, including K-562 (chronic myelogenous leukemia), THP-1 (myelomonocytic leukemia), HL-60 and NB4 (promyelocytic leukemia), and KG-1 (acute myelogenous leukemia) cells. Expressed mainly in the liver and in serum (at protein level).

It localises to the secreted. Mediates the proteolytic cleavage of HP/haptoglobin in the endoplasmic reticulum. This chain is Complement C1r subcomponent-like protein (C1RL), found in Homo sapiens (Human).